We begin with the raw amino-acid sequence, 245 residues long: Probable phosphatase YcdX (245 aa).

Zn(2+) contacts are provided by His7, His9, His15, His40, Glu73, His101, His131, Asp192, and His194.

The protein belongs to the PHP family. Homotrimer. It depends on Zn(2+) as a cofactor.

This chain is Probable phosphatase YcdX, found in Shigella dysenteriae serotype 1 (strain Sd197).